A 139-amino-acid polypeptide reads, in one-letter code: Large ribosomal subunit protein uL16 (139 aa).

Belongs to the universal ribosomal protein uL16 family. Part of the 50S ribosomal subunit.

Functionally, binds 23S rRNA and is also seen to make contacts with the A and possibly P site tRNAs. The polypeptide is Large ribosomal subunit protein uL16 (Chlorobium luteolum (strain DSM 273 / BCRC 81028 / 2530) (Pelodictyon luteolum)).